We begin with the raw amino-acid sequence, 313 residues long: Beta-ketoacyl-[acyl-carrier-protein] synthase III (313 aa).

Catalysis depends on residues cysteine 112 and histidine 238. Residues 239–243 form an ACP-binding region; it reads QANIR. Asparagine 268 is a catalytic residue.

This sequence belongs to the thiolase-like superfamily. FabH family. As to quaternary structure, homodimer.

The protein resides in the cytoplasm. It carries out the reaction malonyl-[ACP] + acetyl-CoA + H(+) = 3-oxobutanoyl-[ACP] + CO2 + CoA. The protein operates within lipid metabolism; fatty acid biosynthesis. Its function is as follows. Catalyzes the condensation reaction of fatty acid synthesis by the addition to an acyl acceptor of two carbons from malonyl-ACP. Catalyzes the first condensation reaction which initiates fatty acid synthesis and may therefore play a role in governing the total rate of fatty acid production. Possesses both acetoacetyl-ACP synthase and acetyl transacylase activities. Its substrate specificity determines the biosynthesis of branched-chain and/or straight-chain of fatty acids. The polypeptide is Beta-ketoacyl-[acyl-carrier-protein] synthase III (Staphylococcus haemolyticus (strain JCSC1435)).